Reading from the N-terminus, the 223-residue chain is N-acetylmuramic acid 6-phosphate phosphatase (223 aa).

Aspartate 9 serves as the catalytic Nucleophile. The Mg(2+) site is built by aspartate 9, aspartate 11, and aspartate 168. The Proton donor role is filled by aspartate 11.

It belongs to the HAD-like hydrolase superfamily. CbbY/CbbZ/Gph/YieH family. Phosphatase MupP subfamily. Mg(2+) is required as a cofactor.

The catalysed reaction is N-acetyl-D-muramate 6-phosphate + H2O = N-acetyl-D-muramate + phosphate. It functions in the pathway cell wall biogenesis; peptidoglycan recycling. Specifically catalyzes the dephosphorylation of N-acetylmuramate 6-phosphate (MurNAc-6P) to MurNac. Is involved in peptidoglycan recycling as part of a cell wall recycling pathway that bypasses de novo biosynthesis of the peptidoglycan precursor UDP-MurNAc. Plays a role in intrinsic resistance to fosfomycin, which targets the de novo synthesis of UDP-MurNAc. Shows a very low activity on GlcNAc-6P, and neither alpha-1-phosphorylated MurNAc, GlcNAc, or glucose nor glucosamine-6P or glucose-6P can be used as a substrate. The protein is N-acetylmuramic acid 6-phosphate phosphatase of Pseudomonas putida (strain ATCC 47054 / DSM 6125 / CFBP 8728 / NCIMB 11950 / KT2440).